A 931-amino-acid chain; its full sequence is Dipeptidyl aminopeptidase A (931 aa).

The span at 1–13 shows a compositional bias: basic residues; that stretch reads MSASTHSHKRKNS. The segment at 1–58 is disordered; the sequence is MSASTHSHKRKNSHLFPQRKSSNSSMDKPFFPNNDSVANTDPQSNENGHTINEIRPTE. At 1–119 the chain is on the cytoplasmic side; the sequence is MSASTHSHKR…GEWSLPEKRS (119 aa). The segment covering 33 to 50 has biased composition (polar residues); it reads NNDSVANTDPQSNENGHT. A helical; Signal-anchor for type II membrane protein transmembrane segment spans residues 120-140; it reads YVLVFTLIALSVLVLLVILIP. At 141-931 the chain is on the lumenal side; sequence SKLLPTKITR…RFDNTEVLHL (791 aa). A glycan (N-linked (GlcNAc...) asparagine) is linked at N377. The Charge relay system role is filled by S785. A glycan (N-linked (GlcNAc...) asparagine) is linked at N814. Active-site charge relay system residues include D863 and H896.

It belongs to the peptidase S9B family.

It localises to the vacuole membrane. In terms of biological role, responsible for the proteolytic maturation of the alpha-factor precursor. This chain is Dipeptidyl aminopeptidase A (STE13), found in Saccharomyces cerevisiae (strain ATCC 204508 / S288c) (Baker's yeast).